The chain runs to 258 residues: Imidazole glycerol phosphate synthase subunit HisF (258 aa).

Catalysis depends on residues D11 and D130.

Belongs to the HisA/HisF family. Heterodimer of HisH and HisF.

The protein resides in the cytoplasm. It carries out the reaction 5-[(5-phospho-1-deoxy-D-ribulos-1-ylimino)methylamino]-1-(5-phospho-beta-D-ribosyl)imidazole-4-carboxamide + L-glutamine = D-erythro-1-(imidazol-4-yl)glycerol 3-phosphate + 5-amino-1-(5-phospho-beta-D-ribosyl)imidazole-4-carboxamide + L-glutamate + H(+). It functions in the pathway amino-acid biosynthesis; L-histidine biosynthesis; L-histidine from 5-phospho-alpha-D-ribose 1-diphosphate: step 5/9. Its function is as follows. IGPS catalyzes the conversion of PRFAR and glutamine to IGP, AICAR and glutamate. The HisF subunit catalyzes the cyclization activity that produces IGP and AICAR from PRFAR using the ammonia provided by the HisH subunit. This chain is Imidazole glycerol phosphate synthase subunit HisF, found in Escherichia coli (strain ATCC 8739 / DSM 1576 / NBRC 3972 / NCIMB 8545 / WDCM 00012 / Crooks).